The primary structure comprises 115 residues: NADH-ubiquinone oxidoreductase chain 3 (115 aa).

3 consecutive transmembrane segments (helical) span residues 4–24, 55–75, and 86–106; these read LTAL…AFWL, FFLV…LLPL, and VMML…AYEW.

This sequence belongs to the complex I subunit 3 family. As to quaternary structure, core subunit of respiratory chain NADH dehydrogenase (Complex I) which is composed of 45 different subunits. Interacts with TMEM186. Interacts with TMEM242.

It is found in the mitochondrion inner membrane. The catalysed reaction is a ubiquinone + NADH + 5 H(+)(in) = a ubiquinol + NAD(+) + 4 H(+)(out). Functionally, core subunit of the mitochondrial membrane respiratory chain NADH dehydrogenase (Complex I) which catalyzes electron transfer from NADH through the respiratory chain, using ubiquinone as an electron acceptor. Essential for the catalytic activity of complex I. This chain is NADH-ubiquinone oxidoreductase chain 3, found in Isthmomys pirrensis (Mount Pirri Isthmus rat).